Reading from the N-terminus, the 21-residue chain is Serine protease inhibitor 1 (21 aa).

The region spanning 1–21 (EQQCTPGQTKKEDCNNCTSGD) is the Pacifastin domain. The interval 1–21 (EQQCTPGQTKKEDCNNCTSGD) is disordered.

Belongs to the protease inhibitor I19 family. As to expression, expressed in hemolymph.

It is found in the secreted. Its function is as follows. Probable serine protease inhibitor. This chain is Serine protease inhibitor 1, found in Melanoplus sanguinipes (Migratory grasshopper).